The sequence spans 242 residues: MTEITDRYFNDVIARLSGLRDRLAAQMEKAADLIAAAARADRRVYVFGTGHSHMMAEELHYRAGGLAITVPILCGSIMLQDGAVASSHFERIEGAVRPILDRYGIRDGDVLVVVSNSGVNAAPIEAARYAREKGAAIIALTSVAYSNTIARGRTQLLSLADVVLDNDAPSGDAVLEIAGSALKVGPVSTALGVTILNAVFADVAARLVGEGDALIYLSANMPGSGDINRLLVERYRDRNPHL.

One can recognise an SIS domain in the interval 30–209; sequence AADLIAAAAR…FADVAARLVG (180 aa).

This sequence belongs to the UPF0309 family.

This Brucella ovis (strain ATCC 25840 / 63/290 / NCTC 10512) protein is UPF0309 protein BOV_A0853.